We begin with the raw amino-acid sequence, 405 residues long: Tryptophan synthase beta chain (405 aa).

K86 is modified (N6-(pyridoxal phosphate)lysine).

The protein belongs to the TrpB family. As to quaternary structure, tetramer of two alpha and two beta chains. Pyridoxal 5'-phosphate is required as a cofactor.

The enzyme catalyses (1S,2R)-1-C-(indol-3-yl)glycerol 3-phosphate + L-serine = D-glyceraldehyde 3-phosphate + L-tryptophan + H2O. Its pathway is amino-acid biosynthesis; L-tryptophan biosynthesis; L-tryptophan from chorismate: step 5/5. In terms of biological role, the beta subunit is responsible for the synthesis of L-tryptophan from indole and L-serine. This chain is Tryptophan synthase beta chain, found in Shewanella piezotolerans (strain WP3 / JCM 13877).